A 1523-amino-acid chain; its full sequence is MAPGRTGAGAAVRARLALALALASILSGPPAAACPTKCTCSAASVDCHGLGLRAVPRGIPRNAERLDLDRNNITRITKMDFTGLKNLRVLHLEDNQVSVIERGAFQDLKQLERLRLNKNKLQVLPELLFQSTPKLTRLDLSENQIQGIPRKAFRGVTGVKNLQLDNNHISCIEDGAFRALRDLEILTLNNNNISRILVTSFNHMPKIRTLRLHSNHLYCDCHLAWLSDWLRQRRTIGQFTLCMAPVHLRGFSVADVQKKEYVCPGPHSEAPACNANSLSCPSACSCSNNIVDCRGKGLTEIPANLPEGIVEIRLEQNSIKSIPAGAFIQYKKLKRIDISKNQISDIAPDAFQGLKSLTSLVLYGNKITEIPKGLFDGLVSLQLLLLNANKINCLRVNTFQDLQNLNLLSLYDNKLQTISKGLFAPLQSIQTLHLAQNPFVCDCHLKWLADYLQDNPIETSGARCSSPRRLANKRISQIKSKKFRCSGSEDYRNRFSSECFMDLVCPEKCRCEGTIVDCSNQKLSRIPSHLPEYTTDLRLNDNDIAVLEATGIFKKLPNLRKINLSNNRIKEVREGAFDGAAGVQELMLTGNQLETMHGRMFRGLSGLKTLMLRSNLISCVNNDTFAGLSSVRLLSLYDNRITTISPGAFTTLVSLSTINLLSNPFNCNCHMAWLGRWLRKRRIVSGNPRCQKPFFLKEIPIQDVAIQDFTCEGNEENSCQLSPRCPEQCTCVETVVRCSNRGLHTLPKGMPKDVTELYLEGNHLTAVPKELSTFRQLTLIDLSNNSISMLTNHTFSNMSHLSTLILSYNRLRCIPVHAFNGLRSLRVLTLHGNDISSVPEGSFNDLTSLSHLALGINPLHCDCSLRWLSEWIKAGYKEPGIARCSSPESMADRLLLTTPTHRFQCKGPVDINIVAKCNACLSSPCKNNGTCSQDPVEQYRCTCPYSYKGKDCTVPINTCVQNPCQHGGTCHLSESHRDGFSCSCPLGFEGQRCEINPDDCEDNDCENSATCVDGINNYACVCPPNYTGELCDEVIDYCVPEMNLCQHEAKCISLDKGFRCECVPGYSGKLCETDNDDCVAHKCRHGAQCVDAVNGYTCICPQGFSGLFCEHPPPMVLLQTSPCDQYECQNGAQCIVVQQEPTCRCPPGFAGPRCEKLITVNFVGKDSYVELASAKVRPQANISLQVATDKDNGILLYKGDNDPLALELYQGHVRLVYDSLSSPPTTVYSVETVNDGQFHSVELVMLNQTLNLVVDKGAPKSLGKLQKQPAVGINSPLYLGGIPTSTGLSALRQGADRPLGGFHGCIHEVRINNELQDFKALPPQSLGVSPGCKSCTVCRHGLCRSVEKDSVVCECHPGWTGPLCDQEAQDPCLGHSCSHGTCVATGNSYVCKCAEGYEGPLCDQKNDSANACSAFKCHHGQCHISDRGEPYCLCQPGFSGNHCEQENPCLGEIVREAIRRQKDYASCATASKVPIMVCRGGCGSQCCQPIRSKRRKYVFQCTDGSSFVEEVERHLECGCRECS.

Positions 1 to 33 (MAPGRTGAGAAVRARLALALALASILSGPPAAA) are cleaved as a signal peptide. One can recognise an LRRNT domain in the interval 34 to 61 (CPTKCTCSAASVDCHGLGLRAVPRGIPR). 6 LRR repeats span residues 62 to 83 (NAER…DFTG), 86 to 107 (NLRV…AFQD), 110 to 131 (QLER…LFQS), 134 to 155 (KLTR…AFRG), 158 to 179 (GVKN…AFRA), and 182 to 203 (DLEI…SFNH). N-linked (GlcNAc...) asparagine glycosylation occurs at asparagine 72. Asparagine 192 carries N-linked (GlcNAc...) asparagine glycosylation. The LRRCT 1 domain occupies 215 to 265 (NHLYCDCHLAWLSDWLRQRRTIGQFTLCMAPVHLRGFSVADVQKKEYVCPG). The region spanning 271–307 (PACNANSLSCPSACSCSNNIVDCRGKGLTEIPANLPE) is the LRRNT 2 domain. A disulfide bond links cysteine 284 and cysteine 293. LRR repeat units lie at residues 308–329 (GIVE…AFIQ), 332–353 (KLKR…AFQG), 356–377 (SLTS…LFDG), 380–401 (SLQL…TFQD), and 404–425 (NLNL…LFAP). In terms of domain architecture, LRRCT 2 spans 437 to 487 (NPFVCDCHLKWLADYLQDNPIETSGARCSSPRRLANKRISQIKSKKFRCSG). 4 disulfide bridges follow: cysteine 441/cysteine 464, cysteine 443/cysteine 485, cysteine 505/cysteine 511, and cysteine 509/cysteine 518. Positions 496 to 532 (SSECFMDLVCPEKCRCEGTIVDCSNQKLSRIPSHLPE) constitute an LRRNT 3 domain. LRR repeat units lie at residues 533-554 (YTTD…GIFK), 558-579 (NLRK…AFDG), 582-603 (GVQE…MFRG), 606-627 (GLKT…TFAG), and 630-651 (SVRL…AFTT). The N-linked (GlcNAc...) asparagine glycan is linked to asparagine 563. Asparagine 622 is a glycosylation site (N-linked (GlcNAc...) asparagine). Residues 663 to 713 (NPFNCNCHMAWLGRWLRKRRIVSGNPRCQKPFFLKEIPIQDVAIQDFTCEG) form the LRRCT 3 domain. 2 disulfides stabilise this stretch: cysteine 667–cysteine 690 and cysteine 669–cysteine 711. The 37-residue stretch at 716–752 (ENSCQLSPRCPEQCTCVETVVRCSNRGLHTLPKGMPK) folds into the LRRNT 4 domain. 4 LRR repeats span residues 753–774 (DVTE…LSTF), 776–797 (QLTL…TFSN), 800–821 (HLST…AFNG), and 824–845 (SLRV…SFND). Asparagine 784, asparagine 792, and asparagine 797 each carry an N-linked (GlcNAc...) asparagine glycan. Residues 857–907 (NPLHCDCSLRWLSEWIKAGYKEPGIARCSSPESMADRLLLTTPTHRFQCKG) form the LRRCT 4 domain. EGF-like domains follow at residues 918–953 (NACL…KDCT), 955–994 (PINT…QRCE), 996–1032 (NPDD…ELCD), 1034–1072 (VIDY…KLCE), 1074–1110 (DNDD…LFCE), and 1119–1155 (QTSP…PRCE). 18 cysteine pairs are disulfide-bonded: cysteine 920/cysteine 931, cysteine 925/cysteine 941, cysteine 943/cysteine 952, cysteine 959/cysteine 970, cysteine 964/cysteine 982, cysteine 984/cysteine 993, cysteine 1000/cysteine 1011, cysteine 1005/cysteine 1020, cysteine 1022/cysteine 1031, cysteine 1038/cysteine 1051, cysteine 1045/cysteine 1060, cysteine 1062/cysteine 1071, cysteine 1078/cysteine 1089, cysteine 1083/cysteine 1098, cysteine 1100/cysteine 1109, cysteine 1123/cysteine 1134, cysteine 1128/cysteine 1143, and cysteine 1145/cysteine 1154. Asparagine 928 carries an N-linked (GlcNAc...) asparagine glycan. An N-linked (GlcNAc...) asparagine glycan is attached at asparagine 1025. A Laminin G-like domain is found at 1158-1332 (ITVNFVGKDS…PQSLGVSPGC (175 aa)). Residues asparagine 1181 and asparagine 1247 are each glycosylated (N-linked (GlcNAc...) asparagine). Intrachain disulfides connect cysteine 1305–cysteine 1332, cysteine 1355–cysteine 1364, cysteine 1372–cysteine 1382, cysteine 1377–cysteine 1391, and cysteine 1393–cysteine 1402. EGF-like domains are found at residues 1340–1365 (HGLC…PLCD) and 1368–1403 (AQDP…PLCD). Asparagine 1406 carries an N-linked (GlcNAc...) asparagine glycan. Positions 1408–1444 (SANACSAFKCHHGQCHISDRGEPYCLCQPGFSGNHCE) constitute an EGF-like 9 domain. Intrachain disulfides connect cysteine 1412–cysteine 1422, cysteine 1417–cysteine 1432, cysteine 1434–cysteine 1443, cysteine 1449–cysteine 1487, cysteine 1467–cysteine 1501, cysteine 1478–cysteine 1517, and cysteine 1482–cysteine 1519. The 75-residue stretch at 1449 to 1523 (CLGEIVREAI…HLECGCRECS (75 aa)) folds into the CTCK domain.

Its subcellular location is the secreted. Its function is as follows. May act as molecular guidance cue in cellular migration, and function may be mediated by interaction with roundabout homolog receptors. This is Slit homolog 3 protein (Slit3) from Rattus norvegicus (Rat).